Here is a 155-residue protein sequence, read N- to C-terminus: RNA pyrophosphohydrolase (155 aa).

The region spanning 6–148 (GYRANVAIVL…KQEVYRKALT (143 aa)) is the Nudix hydrolase domain. The short motif at 38-59 (GGVATGETPLQAMYRELHEEIG) is the Nudix box element.

The protein belongs to the Nudix hydrolase family. RppH subfamily. A divalent metal cation serves as cofactor.

Accelerates the degradation of transcripts by removing pyrophosphate from the 5'-end of triphosphorylated RNA, leading to a more labile monophosphorylated state that can stimulate subsequent ribonuclease cleavage. The sequence is that of RNA pyrophosphohydrolase from Francisella tularensis subsp. tularensis (strain FSC 198).